We begin with the raw amino-acid sequence, 464 residues long: UDP-glycosyltransferase 83A1 (464 aa).

UDP-alpha-D-glucose is bound by residues serine 295, 341-343 (APQ), 358-366 (HCGWNSTLE), and 380-383 (FADQ).

The protein belongs to the UDP-glycosyltransferase family.

The chain is UDP-glycosyltransferase 83A1 (UGT83A1) from Arabidopsis thaliana (Mouse-ear cress).